A 472-amino-acid chain; its full sequence is Siroheme synthase (472 aa).

The tract at residues 1–203 (MNYLPIFIDI…GKIQEAKADL (203 aa)) is precorrin-2 dehydrogenase /sirohydrochlorin ferrochelatase. NAD(+)-binding positions include 22–23 (DI) and 43–44 (KS). Ser-128 bears the Phosphoserine mark. Positions 216–472 (GEVYLVGGGP…SSKKSYLFGG (257 aa)) are uroporphyrinogen-III C-methyltransferase. Residue Pro-225 coordinates S-adenosyl-L-methionine. Residue Asp-248 is the Proton acceptor of the active site. Lys-270 functions as the Proton donor in the catalytic mechanism. Residues 301-303 (GGD), Ile-306, 331-332 (TA), Met-383, and Gly-412 each bind S-adenosyl-L-methionine.

In the N-terminal section; belongs to the precorrin-2 dehydrogenase / sirohydrochlorin ferrochelatase family. The protein in the C-terminal section; belongs to the precorrin methyltransferase family.

The enzyme catalyses uroporphyrinogen III + 2 S-adenosyl-L-methionine = precorrin-2 + 2 S-adenosyl-L-homocysteine + H(+). It catalyses the reaction precorrin-2 + NAD(+) = sirohydrochlorin + NADH + 2 H(+). It carries out the reaction siroheme + 2 H(+) = sirohydrochlorin + Fe(2+). Its pathway is cofactor biosynthesis; adenosylcobalamin biosynthesis; precorrin-2 from uroporphyrinogen III: step 1/1. The protein operates within cofactor biosynthesis; adenosylcobalamin biosynthesis; sirohydrochlorin from precorrin-2: step 1/1. It functions in the pathway porphyrin-containing compound metabolism; siroheme biosynthesis; precorrin-2 from uroporphyrinogen III: step 1/1. It participates in porphyrin-containing compound metabolism; siroheme biosynthesis; siroheme from sirohydrochlorin: step 1/1. Its pathway is porphyrin-containing compound metabolism; siroheme biosynthesis; sirohydrochlorin from precorrin-2: step 1/1. Its function is as follows. Multifunctional enzyme that catalyzes the SAM-dependent methylations of uroporphyrinogen III at position C-2 and C-7 to form precorrin-2 via precorrin-1. Then it catalyzes the NAD-dependent ring dehydrogenation of precorrin-2 to yield sirohydrochlorin. Finally, it catalyzes the ferrochelation of sirohydrochlorin to yield siroheme. This is Siroheme synthase from Ruthia magnifica subsp. Calyptogena magnifica.